The primary structure comprises 417 residues: UDP-N-acetylglucosamine 1-carboxyvinyltransferase (417 aa).

22 to 23 contacts phosphoenolpyruvate; it reads KN. Residue R92 coordinates UDP-N-acetyl-alpha-D-glucosamine. C116 functions as the Proton donor in the catalytic mechanism. C116 carries the post-translational modification 2-(S-cysteinyl)pyruvic acid O-phosphothioketal. UDP-N-acetyl-alpha-D-glucosamine is bound by residues D304 and I326.

Belongs to the EPSP synthase family. MurA subfamily.

Its subcellular location is the cytoplasm. The enzyme catalyses phosphoenolpyruvate + UDP-N-acetyl-alpha-D-glucosamine = UDP-N-acetyl-3-O-(1-carboxyvinyl)-alpha-D-glucosamine + phosphate. It functions in the pathway cell wall biogenesis; peptidoglycan biosynthesis. Its function is as follows. Cell wall formation. Adds enolpyruvyl to UDP-N-acetylglucosamine. The protein is UDP-N-acetylglucosamine 1-carboxyvinyltransferase of Geobacter sulfurreducens (strain ATCC 51573 / DSM 12127 / PCA).